The following is a 397-amino-acid chain: Arginine biosynthesis bifunctional protein ArgJ (397 aa).

Substrate-binding residues include Thr-147, Lys-173, Thr-184, Glu-270, Asn-392, and Thr-397. Thr-184 (nucleophile) is an active-site residue.

Belongs to the ArgJ family. In terms of assembly, heterotetramer of two alpha and two beta chains.

It localises to the cytoplasm. The catalysed reaction is N(2)-acetyl-L-ornithine + L-glutamate = N-acetyl-L-glutamate + L-ornithine. It carries out the reaction L-glutamate + acetyl-CoA = N-acetyl-L-glutamate + CoA + H(+). It participates in amino-acid biosynthesis; L-arginine biosynthesis; L-ornithine and N-acetyl-L-glutamate from L-glutamate and N(2)-acetyl-L-ornithine (cyclic): step 1/1. It functions in the pathway amino-acid biosynthesis; L-arginine biosynthesis; N(2)-acetyl-L-ornithine from L-glutamate: step 1/4. Functionally, catalyzes two activities which are involved in the cyclic version of arginine biosynthesis: the synthesis of N-acetylglutamate from glutamate and acetyl-CoA as the acetyl donor, and of ornithine by transacetylation between N(2)-acetylornithine and glutamate. The sequence is that of Arginine biosynthesis bifunctional protein ArgJ from Streptococcus thermophilus (strain ATCC BAA-250 / LMG 18311).